Reading from the N-terminus, the 180-residue chain is Probable galaptin lec-8 (180 aa).

The 128-residue stretch at 11–138 folds into the Galectin domain; the sequence is SAHAIREQLR…AAHIDEISFS (128 aa).

This is Probable galaptin lec-8 (lec-8) from Caenorhabditis elegans.